A 342-amino-acid polypeptide reads, in one-letter code: Probable receptor-like protein kinase At4g10390 (342 aa).

The region spanning 41-336 (SNFSRLIGSG…IKEIPSLSFL (296 aa)) is the Protein kinase domain. ATP is bound by residues 47 to 55 (IGSGGYSSI) and Lys69. The active-site Proton acceptor is Asp165. 2 positions are modified to phosphoserine: Ser169 and Ser201. A Phosphotyrosine modification is found at Tyr220.

The protein belongs to the protein kinase superfamily. Ser/Thr protein kinase family.

The catalysed reaction is L-seryl-[protein] + ATP = O-phospho-L-seryl-[protein] + ADP + H(+). The enzyme catalyses L-threonyl-[protein] + ATP = O-phospho-L-threonyl-[protein] + ADP + H(+). This chain is Probable receptor-like protein kinase At4g10390, found in Arabidopsis thaliana (Mouse-ear cress).